The primary structure comprises 1256 residues: SNF2 domain-containing protein CLASSY 1 (1256 aa).

Disordered regions lie at residues 269-290 (ELRRSKRRSGRPERYGDSEIQP) and 448-467 (GNVVHKRNGPHSRIRSVSRE). Positions 278–290 (GRPERYGDSEIQP) are enriched in basic and acidic residues. A compositionally biased stretch (basic residues) spans 451–463 (VHKRNGPHSRIRS). The Helicase ATP-binding domain maps to 699-898 (DPSSDKIGGC…FNTLCLARPK (200 aa)). An ATP-binding site is contributed by 712-719 (HTPGAGKT). The DEAH box motif lies at 849-852 (DEGH). Residues 1061 to 1222 (FVLNLVFRVV…EFVEDPSQWQ (162 aa)) enclose the Helicase C-terminal domain.

This sequence belongs to the helicase family. In terms of assembly, interacts with NRPD1, NRPD3 and SHH1.

Its subcellular location is the nucleus. It localises to the nucleoplasm. The protein resides in the nucleolus. Functionally, probable chromatin remodeling factor. Required for the initial establishment of DNA methylation and for accumulation of 24-nt siRNAs. May act on RNA templates by remodeling ribonucleoprotein structures and thereby influencing the availability of the RNA to polymerases. The protein is SNF2 domain-containing protein CLASSY 1 (CLSY1) of Arabidopsis thaliana (Mouse-ear cress).